The following is a 101-amino-acid chain: Integration host factor subunit alpha (101 aa).

It belongs to the bacterial histone-like protein family. In terms of assembly, heterodimer of an alpha and a beta chain.

Functionally, this protein is one of the two subunits of integration host factor, a specific DNA-binding protein that functions in genetic recombination as well as in transcriptional and translational control. In Alkalilimnicola ehrlichii (strain ATCC BAA-1101 / DSM 17681 / MLHE-1), this protein is Integration host factor subunit alpha.